The following is a 57-amino-acid chain: Mambaquaretin-3 (57 aa).

Residues 5-55 (CNLPVKPGPCNGFFSAFYYSQKKNKCHSFTYGGCKGNANRFSTIEECRRTC) form the BPTI/Kunitz inhibitor domain. Cystine bridges form between cysteine 5–cysteine 55, cysteine 14–cysteine 38, and cysteine 30–cysteine 51.

This sequence belongs to the venom Kunitz-type family. As to expression, expressed by the venom gland.

It is found in the secreted. In terms of biological role, interacts with vasopressin V2 receptor (V2R/AVPR2), probably in a selective manner. Inhibits vasopressin binding human V2R in the nanomolar range (Ki=13.3 nM), and also moderately inhibits vasopressin-induced cAMP production (IC(50)=453 nM). In vivo, intraperitoneal injection of this protein into rats increases diuresis by 4.5-fold, without any loss of electrolytes. The chain is Mambaquaretin-3 from Dendroaspis polylepis polylepis (Black mamba).